The sequence spans 157 residues: SsrA-binding protein (157 aa).

A disordered region spans residues 133-157; the sequence is LHDKRESEKKRDWGREKGRLLRARG. Residues 135–151 are compositionally biased toward basic and acidic residues; the sequence is DKRESEKKRDWGREKGR.

Belongs to the SmpB family.

It localises to the cytoplasm. In terms of biological role, required for rescue of stalled ribosomes mediated by trans-translation. Binds to transfer-messenger RNA (tmRNA), required for stable association of tmRNA with ribosomes. tmRNA and SmpB together mimic tRNA shape, replacing the anticodon stem-loop with SmpB. tmRNA is encoded by the ssrA gene; the 2 termini fold to resemble tRNA(Ala) and it encodes a 'tag peptide', a short internal open reading frame. During trans-translation Ala-aminoacylated tmRNA acts like a tRNA, entering the A-site of stalled ribosomes, displacing the stalled mRNA. The ribosome then switches to translate the ORF on the tmRNA; the nascent peptide is terminated with the 'tag peptide' encoded by the tmRNA and targeted for degradation. The ribosome is freed to recommence translation, which seems to be the essential function of trans-translation. This Bradyrhizobium sp. (strain BTAi1 / ATCC BAA-1182) protein is SsrA-binding protein.